Consider the following 212-residue polypeptide: Thymidylate kinase (212 aa).

An ATP-binding site is contributed by 11–18 (GPDGAGKT).

It belongs to the thymidylate kinase family.

It catalyses the reaction dTMP + ATP = dTDP + ADP. Phosphorylation of dTMP to form dTDP in both de novo and salvage pathways of dTTP synthesis. The protein is Thymidylate kinase of Streptococcus mutans serotype c (strain ATCC 700610 / UA159).